The primary structure comprises 127 residues: Major sperm protein 33 (127 aa).

A2 carries the post-translational modification N-acetylalanine. The region spanning 9-126 (DIQTQPGTKI…RRKNLPIEYN (118 aa)) is the MSP domain.

In terms of tissue distribution, sperm.

It localises to the cell projection. Its subcellular location is the pseudopodium. The protein resides in the cytoplasm. It is found in the cytoskeleton. Functionally, central component in molecular interactions underlying sperm crawling. Forms an extensive filament system that extends from sperm villipoda, along the leading edge of the pseudopod. This chain is Major sperm protein 33 (msp-33), found in Caenorhabditis elegans.